The following is a 362-amino-acid chain: Solute carrier family 25 member 3 (362 aa).

The transit peptide at 1–49 (MYSSVVHLARANPFNAPHLQLVHDGLAGPRSDPAGPPGPPRRSRNLAAA) directs the protein to the mitochondrion. Residues 50–63 (AVEEQYSCDYGSGR) are Mitochondrial intermembrane-facing. Solcar repeat units follow at residues 63-147 (RFFI…FKVL), 160-244 (WRTS…TVEA), and 261-339 (EQLV…VKVY). A helical transmembrane segment spans residues 64-86 (FFILCGLGGIISCGTTHTALVPL). The Mitochondrial matrix portion of the chain corresponds to 87-121 (DLVKCRMQVDPQKYKSIFNGFSVTLKEDGFRGLAK). The residue at position 99 (Lys99) is an N6-acetyllysine. Lys112 is modified (N6-methyllysine). A helical membrane pass occupies residues 122 to 141 (GWAPTFIGYSLQGLCKFGFY). Topologically, residues 142-161 (EVFKVLYSNMLGEENAYLWR) are mitochondrial intermembrane. The chain crosses the membrane as a helical span at residues 162-183 (TSLYLAASASAEFFADIALAPM). Residues 184–218 (EAAKVRIQTQPGYANTLRDAAPKMYKEEGLKAFYK) lie on the Mitochondrial matrix side of the membrane. Tyr196 carries the phosphotyrosine modification. Residue Lys209 is modified to N6-acetyllysine. A helical transmembrane segment spans residues 219 to 238 (GVAPLWMRQIPYTMMKFACF). Residues 239 to 261 (ERTVEALYKFVVPKPRSECSKPE) lie on the Mitochondrial intermembrane side of the membrane. A helical transmembrane segment spans residues 262 to 284 (QLVVTFVAGYIAGVFCAIVSHPA). The Mitochondrial matrix portion of the chain corresponds to 285–314 (DSVVSVLNKEKGSSASEVLKRLGFRGVWKG). A helical membrane pass occupies residues 315–333 (LFARIIMIGTLTALQWFIY). Over 334 to 362 (DSVKVYFRLPRPPPPEMPESLKKKLGYTQ) the chain is Mitochondrial intermembrane.

It belongs to the mitochondrial carrier (TC 2.A.29) family. As to quaternary structure, interacts with PPIF; the interaction is impaired by CsA. Expressed in heart, diaphragm and skeletal muscle (at protein level). Not detected in liver, lung, brain, and kidney (at protein level). In terms of tissue distribution, ubiquitous (at protein level).

It is found in the mitochondrion inner membrane. It catalyses the reaction phosphate(in) + H(+)(in) = phosphate(out) + H(+)(out). With respect to regulation, up-regulated in the presence of cardiolipin. Inorganic ion transporter that transports phosphate or copper ions across the mitochondrial inner membrane into the matrix compartment. Mediates proton-coupled symport of phosphate ions necessary for mitochondrial oxidative phosphorylation of ADP to ATP. Transports copper ions probably in the form of anionic copper(I) complexes to maintain mitochondrial matrix copper pool and to supply copper for cytochrome C oxidase complex assembly. May also play a role in regulation of the mitochondrial permeability transition pore (mPTP). The protein is Solute carrier family 25 member 3 of Bos taurus (Bovine).